The chain runs to 347 residues: Vitellogenin-3 (347 aa).

An N-terminal signal peptide occupies residues 1–15; the sequence is MRGFILALVLALVGA. An N-linked (GlcNAc...) asparagine glycan is attached at asparagine 80. A compositionally biased stretch (low complexity) spans 104–118; sequence PSATPLSSSSSTDSS. Disordered stretches follow at residues 104–174 and 200–234; these read PSAT…DKHC and QDPRRKVQNSSISSSSSSSSDEGISTPVSQPMFLG. Residues 124 to 133 show a composition bias toward basic and acidic residues; the sequence is PGNKRDKDEI. Low complexity predominate over residues 144 to 163; sequence SSSSSSSSSTGSGSSKTCSS. A compositionally biased stretch (basic and acidic residues) spans 164 to 174; sequence SREDSSRDKHC. A glycan (N-linked (GlcNAc...) asparagine) is linked at asparagine 208. The segment covering 209 to 219 has biased composition (low complexity); sequence SSISSSSSSSS.

In terms of processing, phosvitin, an egg yolk storage protein, is one of the most highly phosphorylated (10%) proteins in nature. Cathepsin D is responsible for intraoocytic processing of vitellogenin. Post-translationally, may contain intrachain disulfide bonds. In terms of tissue distribution, produced by the liver, secreted into the blood and then sequestered by receptor mediated endocytosis into growing oocytes, where it is generally cleaved, giving rise to the respective yolk components.

Functionally, precursor of the egg-yolk proteins that are sources of nutrients during early development of oviparous organisms. In terms of biological role, phosvitin is believed to be of importance in sequestering calcium, iron and other cations for the developing embryo. This Gallus gallus (Chicken) protein is Vitellogenin-3 (VTG3).